A 489-amino-acid polypeptide reads, in one-letter code: Occludin (489 aa).

Residues 1-51 are Cytoplasmic-facing; that stretch reads MMYEKRSYTGYGHPSSHYDYPPPSGPPGSFYLADVPPQHFYQWRSPPGIVR. The MARVEL domain occupies 45–248; it reads SPPGIVRILQ…ICYFAQKTRH (204 aa). A helical membrane pass occupies residues 52–74; sequence ILQGSVVILCLVIFACVASTLAW. Over 75–112 the chain is Extracellular; sequence EYYGSGGLLGYGGGLGSYYNGYYGGYNGYYYGGLTNPR. A helical membrane pass occupies residues 113–137; it reads AANGFMIAMAVLCFLVTLGLVIAGL. Residues 138–147 lie on the Cytoplasmic side of the membrane; that stretch reads SKASGARSRR. Residues 148–172 form a helical membrane-spanning segment; the sequence is FYLLVAVLSGLLAFVMLIASIVYVV. Over 173–222 the chain is Extracellular; sequence GVNPRAGLGASSGSLYYNQMLMLCNQMMSPVAGGIMNQYLYHYCMVDPQE. Cysteines 196 and 216 form a disulfide. A helical transmembrane segment spans residues 223 to 244; that stretch reads AVAIVCGFLTVILLCVICYFAQ. The Cytoplasmic segment spans residues 245–489; that stretch reads KTRHKIWKYG…MVGGYDQSRS (245 aa). Ser280 carries the phosphoserine modification. Thr285 bears the Phosphothreonine mark. Position 300 is a phosphoserine (Ser300). Residues 308–382 are disordered; it reads PAQENGYGHS…ESSGEQNRDD (75 aa). Over residues 322–332 the composition is skewed to pro residues; sequence PSVPPPEGPSP. Basic residues predominate over residues 345–354; the sequence is PARRGHRQRP. Residues Tyr364 and Tyr368 each carry the phosphotyrosine modification. Over residues 365-377 the composition is skewed to polar residues; sequence ETDYTTAAESSGE. Phosphothreonine; by PKC/PRKCH is present on residues Thr369 and Thr370. Phosphoserine is present on Ser374. In terms of domain architecture, OCEL spans 381 to 489; it reads DDWASLYPPI…MVGGYDQSRS (109 aa). Residues 407–434 are a coiled coil; sequence LQRYKALCAEMDDIGTQLRQLSHELDCL. Ser457 carries the phosphoserine modification.

The protein belongs to the ELL/occludin family. As to quaternary structure, interacts with TJP1/ZO1. Interacts with VAPA. Interacts with CLDN1, CLDN6, CLDN9, CLDN11, CLDN12 and CLDN17. Interacts with PLSCR1. Interacts with LSR, ILDR1 and ILDR2. Interacts with TJP2/ZO2. Post-translationally, dephosphorylated by PTPRJ. As to expression, localized at tight junctions of both epithelial and endothelial cells.

It localises to the cell membrane. Its subcellular location is the cell junction. The protein localises to the tight junction. Its function is as follows. May play a role in the formation and regulation of the tight junction (TJ) paracellular permeability barrier. This chain is Occludin (OCLN), found in Potorous tridactylus (Potoroo).